We begin with the raw amino-acid sequence, 493 residues long: MAQVINTNSLSLLTQNNLNKSQSALGTAIERLSSGLRINSAKDDAAGQAIANRFTANIKGLTQASRNANDGISIAQTTEGALNEINNNLQRVRELAVQSANSTNSQSDLDSIQAEITQRLNEIDRVSGQTQFNGVKVLAQDNTLTIQVGANDGETIDIDLKQINSQTLGLDTLNVQQKYKVSDTAATVTGYTDSATAIDKSTFAASATTLGGTPAITGDLKFDDTTGKYYADVSGTTAKDGVYEVTVAADGKVTLTGTPTGPITAGFPSTATKDVKQTQQENADLTEAKAALTAAGVAAAGHRSVVKMSYTDNNGKTIDGGLAVKVGDDYYSATQNKDGSISINTTKYTADNGTSKTALNKLGGADGKTEVVSIGGKTYAASKAEGHNFKAQPDLAEAAATTTENPLQKIDAALAQVDTLRSDLGAVQNRFNSAITNLGNTVNNLTSARSRIEDSDYATEVSNMSRAQILQQAGTSVLAQANQVPQNVLSLLR.

This sequence belongs to the bacterial flagellin family.

It localises to the secreted. The protein resides in the bacterial flagellum. Its function is as follows. Flagellin is the subunit protein which polymerizes to form the filaments of bacterial flagella. In Salmonella rubislaw, this protein is Flagellin (fliC).